The sequence spans 186 residues: Ribosome-recycling factor (186 aa).

This sequence belongs to the RRF family.

It is found in the cytoplasm. Functionally, responsible for the release of ribosomes from messenger RNA at the termination of protein biosynthesis. May increase the efficiency of translation by recycling ribosomes from one round of translation to another. In Ralstonia nicotianae (strain ATCC BAA-1114 / GMI1000) (Ralstonia solanacearum), this protein is Ribosome-recycling factor.